The chain runs to 279 residues: Small ribosomal subunit protein uS2 (279 aa).

Residues 232 to 279 (RRRGTDEKPEAGVASDEPLAEWERELLEEPKKSDEPKSDEQPAAAAAE) are disordered. Over residues 252–271 (EWERELLEEPKKSDEPKSDE) the composition is skewed to basic and acidic residues.

Belongs to the universal ribosomal protein uS2 family.

This is Small ribosomal subunit protein uS2 from Salinispora arenicola (strain CNS-205).